Reading from the N-terminus, the 84-residue chain is Small ribosomal subunit protein uS17 (84 aa).

Belongs to the universal ribosomal protein uS17 family. As to quaternary structure, part of the 30S ribosomal subunit.

One of the primary rRNA binding proteins, it binds specifically to the 5'-end of 16S ribosomal RNA. The sequence is that of Small ribosomal subunit protein uS17 from Clostridium botulinum (strain ATCC 19397 / Type A).